We begin with the raw amino-acid sequence, 208 residues long: MASKCPKCDKTVYFAEKVSSLGKDWHRFCLRCEHCSKTLTPGGHAEHDGKPFCHKPCYATLFGPKGVNIGGAGSYIYEKPSAEKPQVTGPIEVPVARTEERKASGPPKGPSKASSVTTFTGEPNMCPRCNKRVYFAEKVTSLGKDWHRPCLRCERCGKTLTPGGHAEHDGQPYCHKPCYGILFGPKGVNTGAVGSYIYDKDPEGKAQP.

The LIM zinc-binding 1 domain maps to 5–57; it reads CPKCDKTVYFAEKVSSLGKDWHRFCLRCEHCSKTLTPGGHAEHDGKPFCHKPC. At lysine 23 the chain carries N6-acetyllysine. Residues 98 to 117 are disordered; it reads TEERKASGPPKGPSKASSVT. Serine 104 carries the phosphoserine modification. Low complexity predominate over residues 104–115; that stretch reads SGPPKGPSKASS. Residues 126–178 enclose the LIM zinc-binding 2 domain; that stretch reads CPRCNKRVYFAEKVTSLGKDWHRPCLRCERCGKTLTPGGHAEHDGQPYCHKPC. An N6-acetyllysine mark is found at lysine 138 and lysine 144.

In terms of assembly, interacts with TGFB1I1.

This chain is Cysteine-rich protein 2 (CRIP2), found in Bos taurus (Bovine).